We begin with the raw amino-acid sequence, 369 residues long: Chorismate synthase (369 aa).

The NADP(+) site is built by Arg-48 and Arg-54. Residues 125 to 127 (RSS), 238 to 239 (NA), Gly-278, 293 to 297 (KPTSS), and Arg-319 each bind FMN.

Belongs to the chorismate synthase family. Homotetramer. The cofactor is FMNH2.

It carries out the reaction 5-O-(1-carboxyvinyl)-3-phosphoshikimate = chorismate + phosphate. Its pathway is metabolic intermediate biosynthesis; chorismate biosynthesis; chorismate from D-erythrose 4-phosphate and phosphoenolpyruvate: step 7/7. In terms of biological role, catalyzes the anti-1,4-elimination of the C-3 phosphate and the C-6 proR hydrogen from 5-enolpyruvylshikimate-3-phosphate (EPSP) to yield chorismate, which is the branch point compound that serves as the starting substrate for the three terminal pathways of aromatic amino acid biosynthesis. This reaction introduces a second double bond into the aromatic ring system. This chain is Chorismate synthase, found in Burkholderia mallei (strain ATCC 23344).